We begin with the raw amino-acid sequence, 582 residues long: Phosphoribosylaminoimidazole carboxylase (582 aa).

Positions 114–305 (KKYLAEKGVA…QFENHLRAIL (192 aa)) constitute an ATP-grasp domain. 143–200 (AGRLGLPLMLKAKTLAYDGRGNSPLKSTSSEDIQASLKFLGDRPLYAEGWAPFVKEVA) lines the ATP pocket.

In the C-terminal section; belongs to the AIR carboxylase family. Class I subfamily.

It carries out the reaction 5-amino-1-(5-phospho-D-ribosyl)imidazole-4-carboxylate + H(+) = 5-amino-1-(5-phospho-beta-D-ribosyl)imidazole + CO2. It participates in purine metabolism; IMP biosynthesis via de novo pathway; 5-amino-1-(5-phospho-D-ribosyl)imidazole-4-carboxylate from 5-amino-1-(5-phospho-D-ribosyl)imidazole (carboxylase route): step 1/1. The protein is Phosphoribosylaminoimidazole carboxylase (ADE2) of Cryptococcus neoformans var. grubii serotype A (strain H99 / ATCC 208821 / CBS 10515 / FGSC 9487) (Filobasidiella neoformans var. grubii).